Here is a 341-residue protein sequence, read N- to C-terminus: MASCVTGTEAAIRAAACRDGEEASHLKIVAVFAIFLTSVFGVWGPVLLAKYFHGKPLYDKAILVIKCFAAGVILSTSLVHVLPEAFESLADCQVSSRHPWKDFPFAGLVTMIGAITALLVDLTASEHMGHGGGGGGDGGMEYMPVGKAVGGLEMKEGKCGADLEIQENSEEEIVKMKQRLVSQVLEIGIIFHSVIIGVTMGMSQNKCTIRPLIAALSFHQIFEGLGLGGCIAQAGFKAGTVVYMCLMFAVTTPLGIVLGMVIFAATGYDDQNPNALIMEGLLGSFSSGILIYMALVDLIALDFFHNKMLTTCGESGSRLKKLCFVALVLGSASMSLLALWA.

Residues Ile28–Leu48 traverse the membrane as a helical segment. At Ala49–Ala61 the chain is on the cytoplasmic side. Residues Ile62–Leu82 traverse the membrane as a helical segment. Over Pro83–Asp102 the chain is Lumenal. The chain crosses the membrane as a helical span at residues Phe103–Thr123. At Ala124–Arg179 the chain is on the cytoplasmic side. Residues Leu180 to Met200 traverse the membrane as a helical segment. Residues Gly201–Pro211 lie on the Lumenal side of the membrane. The helical transmembrane segment at Leu212–Ala232 threads the bilayer. Residues Gln233–Tyr243 lie on the Cytoplasmic side of the membrane. Residues Met244–Ala264 traverse the membrane as a helical segment. Residues Ala265–Gly280 lie on the Lumenal side of the membrane. The helical transmembrane segment at Leu281–Leu301 threads the bilayer. Residues Asp302–Lys320 lie on the Cytoplasmic side of the membrane. Residues Lys321–Ala341 traverse the membrane as a helical segment.

It belongs to the ZIP transporter (TC 2.A.5) family.

It localises to the plastid. It is found in the chloroplast thylakoid membrane. Its function is as follows. May play a role in the transport of zinc in the plastids. This chain is Zinc transporter 6, chloroplastic (ZIP6), found in Arabidopsis thaliana (Mouse-ear cress).